The sequence spans 266 residues: Transcription regulator FGM4 (266 aa).

The disordered stretch occupies residues 17-36; the sequence is KTQNRLAKRKSRIHAGKQQG. Residues 18 to 31 are compositionally biased toward basic residues; that stretch reads TQNRLAKRKSRIHA. 2 ANK repeats span residues 183-212 and 216-245; these read KPGSPLHIASAMGHLKVVKTLITYGANVNE and AGYSPIHYATRNNHTAIVALLLEKGADWSY.

Its subcellular location is the nucleus. In terms of biological role, transcription regulator; part of the Fg3_54/C64 gene cluster that mediates the biosynthesis of the octapeptide fusaoctaxin A, a virulence factor that is required for cell-to-cell invasiveness of plant host. Positively regulates the expression the Fg3_54/C64 gene cluster. The protein is Transcription regulator FGM4 of Gibberella zeae (strain ATCC MYA-4620 / CBS 123657 / FGSC 9075 / NRRL 31084 / PH-1) (Wheat head blight fungus).